A 387-amino-acid polypeptide reads, in one-letter code: 3-ketoacyl-CoA thiolase (387 aa).

C91 (acyl-thioester intermediate) is an active-site residue. Catalysis depends on proton acceptor residues H343 and C373.

The protein belongs to the thiolase-like superfamily. Thiolase family. Heterotetramer of two alpha chains (FadB) and two beta chains (FadA).

The protein resides in the cytoplasm. The enzyme catalyses an acyl-CoA + acetyl-CoA = a 3-oxoacyl-CoA + CoA. The protein operates within lipid metabolism; fatty acid beta-oxidation. In terms of biological role, catalyzes the final step of fatty acid oxidation in which acetyl-CoA is released and the CoA ester of a fatty acid two carbons shorter is formed. This Idiomarina loihiensis (strain ATCC BAA-735 / DSM 15497 / L2-TR) protein is 3-ketoacyl-CoA thiolase.